A 343-amino-acid polypeptide reads, in one-letter code: MASLQRSRVLRCCSCRLFQAHQVKKSVKWTCKACGEKQSFLQAYGEGSGADCRRHVQKLNLLQGQVSELPLRSLEETVSASEEENVGHQQAGNVKQQEKSQPSESRWLKYLEKDSQELELEGTGVCFSKQPSSKMEEPGPRFSQDLPRKRKWSRSTVQPPCSRGVQDSGGSEVAWGPQKGQAGLTWKVKQGSSPCLQENSADCSAGELRGPGKELWSPIQQVTATSSKWAQFVLPPRKSSHVDSEQPRSLQRDPRPAGPAQAKQGTPRAQASREGLSRPTAAVQLPRATHPVTSGSERPCGKTSWDARTPWAEGGPLVLEAQNPRPTRLCDLFITGEDFDDDV.

The disordered stretch occupies residues 75–104 (EETVSASEEENVGHQQAGNVKQQEKSQPSE). Over residues 87–104 (GHQQAGNVKQQEKSQPSE) the composition is skewed to polar residues. 2 positions are modified to phosphoserine: Ser-100 and Ser-115. Disordered stretches follow at residues 128 to 178 (SKQP…WGPQ), 193 to 212 (SPCL…RGPG), and 230 to 324 (AQFV…AQNP). The short motif at 148 to 151 (RKRK) is the Nuclear localization signal (NLS) element. A compositionally biased stretch (polar residues) spans 193 to 202 (SPCLQENSAD). The necessary for the association with the MRN complex stretch occupies residues 213-237 (KELWSPIQQVTATSSKWAQFVLPPR). Residues 240 to 255 (SHVDSEQPRSLQRDPR) show a composition bias toward basic and acidic residues.

The protein belongs to the MRNIP family. As to quaternary structure, associates with the MRE11-RAD50-NBN (MRN) damage-sensing complex; this association is constitutive. Interacts with MRE11. Interacts with NBN. Interacts with RAD50. Post-translationally, phosphorylated; phosphorylation is constitutive and occurs in the absence of any DNA-damaging stimulus. Phosphorylation on Ser-115 is necessary for its nuclear retention.

It localises to the nucleus. The protein resides in the nucleoplasm. In terms of biological role, plays a role in the cellular response to DNA damage and the maintenance of genome stability through its association with the MRN damage-sensing complex. Promotes chromatin loading and activity of the MRN complex to facilitate subsequent ATM-mediated DNA damage response signaling and DNA repair. The sequence is that of MRN complex-interacting protein from Homo sapiens (Human).